The primary structure comprises 594 residues: UvrABC system protein C (594 aa).

One can recognise a GIY-YIG domain in the interval 15–92 (DKPGCYQMKN…IQKFQPYYNI (78 aa)). Positions 197–232 (AKIKQSLQTKMQKASEAMEFERAADIRDQIHYIEVT) constitute a UVR domain.

Belongs to the UvrC family. Interacts with UvrB in an incision complex.

Its subcellular location is the cytoplasm. The UvrABC repair system catalyzes the recognition and processing of DNA lesions. UvrC both incises the 5' and 3' sides of the lesion. The N-terminal half is responsible for the 3' incision and the C-terminal half is responsible for the 5' incision. This Pediococcus pentosaceus (strain ATCC 25745 / CCUG 21536 / LMG 10740 / 183-1w) protein is UvrABC system protein C.